We begin with the raw amino-acid sequence, 504 residues long: Pentatricopeptide repeat-containing protein At1g05600 (504 aa).

PPR repeat units lie at residues 45–79 (NGSVYATMIDILGKSNRVLEMKYVIERMKEDSCEC), 80–114 (KDSVFASVIRTFSRAGRLEDAISLFKSLHEFNCVN), 115–145 (WSLSFDTLLQEMVKESELEAACHIFRKYCYG), 151–185 (RITALNLLMKVLCQVNRSDLASQVFQEMNYQGCYP), 186–216 (DRDSYRILMKGFCLEGKLEEATHLLYSMFWR), 225–259 (DIVVYRILLDALCDAGEVDDAIEILGKILRKGLKA), 260–296 (PKRCYHHIEAGHWESSSEGIERVKRLLTETLIRGAIP), 297–331 (CLDSYSAMATDLFEEGKLVEGEEVLLAMRSKGFEP), 332–367 (TPFIYGAKVKALCRAGKLKEAVSVINKEMMQGHCLP), 368–398 (TVGVYNVLIKGLCDDGKSMEAVGYLKKMSKQ), 404–438 (NEETYQTLVDGLCRDGQFLEASQVMEEMLIKSHFP), and 439–473 (GVETYHMMIKGLCDMDRRYEAVMWLEEMVSQDMVP).

It belongs to the PPR family. P subfamily.

In Arabidopsis thaliana (Mouse-ear cress), this protein is Pentatricopeptide repeat-containing protein At1g05600.